The sequence spans 346 residues: D-fructose 1,6-bisphosphatase class 2/sedoheptulose 1,7-bisphosphatase (346 aa).

4 residues coordinate Mn(2+): D33, E57, D97, and E100. Residues 100–102 (EGT), Y131, 176–178 (RDR), and 198–200 (DGD) contribute to the substrate site. A Mn(2+)-binding site is contributed by E225.

This sequence belongs to the FBPase class 2 family. Homotetramer. Mn(2+) serves as cofactor.

The catalysed reaction is beta-D-fructose 1,6-bisphosphate + H2O = beta-D-fructose 6-phosphate + phosphate. The enzyme catalyses D-sedoheptulose 1,7-bisphosphate + H2O = D-sedoheptulose 7-phosphate + phosphate. It functions in the pathway carbohydrate biosynthesis; Calvin cycle. Catalyzes the hydrolysis of fructose 1,6-bisphosphate (Fru 1,6-P2) and sedoheptulose 1,7-bisphosphate (Sed 1,7-P2) to fructose 6-phosphate and sedoheptulose 7-phosphate, respectively. The chain is D-fructose 1,6-bisphosphatase class 2/sedoheptulose 1,7-bisphosphatase from Gloeobacter violaceus (strain ATCC 29082 / PCC 7421).